Here is a 285-residue protein sequence, read N- to C-terminus: Inositol oxygenase (285 aa).

Residue R29 coordinates substrate. S33 is subject to Phosphoserine. A substrate-binding site is contributed by 85–87 (DES). Fe cation-binding residues include H98, H123, and D124. Substrate-binding positions include K127 and 141 to 142 (GD). Fe cation-binding residues include H194, H220, and D253. 220–221 (HS) contributes to the substrate binding site.

It belongs to the myo-inositol oxygenase family. Requires Fe cation as cofactor.

The protein localises to the cytoplasm. It catalyses the reaction myo-inositol + O2 = D-glucuronate + H2O + H(+). The protein operates within polyol metabolism; myo-inositol degradation into D-glucuronate; D-glucuronate from myo-inositol: step 1/1. The polypeptide is Inositol oxygenase (MIOX) (Pongo abelii (Sumatran orangutan)).